The chain runs to 156 residues: Small ribosomal subunit protein bS6 (156 aa).

The tract at residues 98–156 is disordered; sequence GHDFRDQRSHHGQAGEFRKREPQQKSKEQSEFSKEKKSFSKSVTKKTVVSKPKETKEEK. Positions 113-135 are enriched in basic and acidic residues; that stretch reads EFRKREPQQKSKEQSEFSKEKKS. Over residues 137-147 the composition is skewed to low complexity; sequence SKSVTKKTVVS.

The protein belongs to the bacterial ribosomal protein bS6 family.

Functionally, binds together with bS18 to 16S ribosomal RNA. This chain is Small ribosomal subunit protein bS6, found in Mycoplasmopsis synoviae (strain 53) (Mycoplasma synoviae).